The primary structure comprises 273 residues: Ribosomal RNA small subunit methyltransferase A (273 aa).

Asn18, Leu20, Gly45, Glu66, Asp91, and Asn113 together coordinate S-adenosyl-L-methionine.

This sequence belongs to the class I-like SAM-binding methyltransferase superfamily. rRNA adenine N(6)-methyltransferase family. RsmA subfamily.

It is found in the cytoplasm. The catalysed reaction is adenosine(1518)/adenosine(1519) in 16S rRNA + 4 S-adenosyl-L-methionine = N(6)-dimethyladenosine(1518)/N(6)-dimethyladenosine(1519) in 16S rRNA + 4 S-adenosyl-L-homocysteine + 4 H(+). Specifically dimethylates two adjacent adenosines (A1518 and A1519) in the loop of a conserved hairpin near the 3'-end of 16S rRNA in the 30S particle. May play a critical role in biogenesis of 30S subunits. This is Ribosomal RNA small subunit methyltransferase A from Escherichia coli O139:H28 (strain E24377A / ETEC).